Consider the following 187-residue polypeptide: Ribosome maturation factor RimM (187 aa).

Residues glutamate 96–glycine 169 form the PRC barrel domain.

This sequence belongs to the RimM family. As to quaternary structure, binds ribosomal protein uS19.

The protein localises to the cytoplasm. Functionally, an accessory protein needed during the final step in the assembly of 30S ribosomal subunit, possibly for assembly of the head region. Essential for efficient processing of 16S rRNA. May be needed both before and after RbfA during the maturation of 16S rRNA. It has affinity for free ribosomal 30S subunits but not for 70S ribosomes. The polypeptide is Ribosome maturation factor RimM (Rhizobium meliloti (strain 1021) (Ensifer meliloti)).